Here is a 245-residue protein sequence, read N- to C-terminus: Sugar fermentation stimulation protein homolog (245 aa).

The protein belongs to the SfsA family.

The chain is Sugar fermentation stimulation protein homolog from Yersinia pseudotuberculosis serotype I (strain IP32953).